A 692-amino-acid chain; its full sequence is Elongation factor G (692 aa).

In terms of domain architecture, tr-type G spans 8 to 283 (EKVRNIGIAA…AVVDYLPAPT (276 aa)). GTP contacts are provided by residues 17 to 24 (AHIDAGKT), 81 to 85 (DTPGH), and 135 to 138 (NKMD).

It belongs to the TRAFAC class translation factor GTPase superfamily. Classic translation factor GTPase family. EF-G/EF-2 subfamily.

The protein resides in the cytoplasm. In terms of biological role, catalyzes the GTP-dependent ribosomal translocation step during translation elongation. During this step, the ribosome changes from the pre-translocational (PRE) to the post-translocational (POST) state as the newly formed A-site-bound peptidyl-tRNA and P-site-bound deacylated tRNA move to the P and E sites, respectively. Catalyzes the coordinated movement of the two tRNA molecules, the mRNA and conformational changes in the ribosome. This Nitratiruptor sp. (strain SB155-2) protein is Elongation factor G.